The chain runs to 416 residues: MNKQSWLLNLSLLKTHPAFRAVFLARFISIVSLGLLGVAVPVQIQMMTHSTWLVGLSVTLTGGAMFVGLMVGGVLADRYERKKVILLARGTCGIGFIGLCLNALLPEPSLLAIYLLGLWDGFFASLGVTALLAATPALVGRENLMQAGAITMLTVRLGSVISPMIGGLLLATGGVAWNYGLAAAGTFITLLPLLSLPALPPPPQPREHPLKSLLAGFRFLLASPLVGGIALLGGLLTMASAVRVLYPALADNWQMSAAEIGFLYAAIPLGAAIGALTSGKLAHSARPGLLMLLSTLGSFLAIGLFGLMPMWILGVVCLALFGWLSAVSSLLQYTMLQTQTPEAMLGRINGLWTAQNVTGDAIGAALLGGLGAMMTPVASASASGFGLLIIGVLLLLVLVELRRFRQTPPQVTASDS.

Residues 1-21 (MNKQSWLLNLSLLKTHPAFRA) are Cytoplasmic-facing. Residues 22-42 (VFLARFISIVSLGLLGVAVPV) traverse the membrane as a helical segment. Residues 43–55 (QIQMMTHSTWLVG) are Periplasmic-facing. A helical transmembrane segment spans residues 56 to 76 (LSVTLTGGAMFVGLMVGGVLA). The Cytoplasmic portion of the chain corresponds to 77-83 (DRYERKK). Residues 84–104 (VILLARGTCGIGFIGLCLNAL) form a helical membrane-spanning segment. Over 105–109 (LPEPS) the chain is Periplasmic. The chain crosses the membrane as a helical span at residues 110 to 130 (LLAIYLLGLWDGFFASLGVTA). Residues 131–156 (LLAATPALVGRENLMQAGAITMLTVR) lie on the Cytoplasmic side of the membrane. The chain crosses the membrane as a helical span at residues 157 to 177 (LGSVISPMIGGLLLATGGVAW). Position 178 (Asn-178) is a topological domain, periplasmic. The chain crosses the membrane as a helical span at residues 179-199 (YGLAAAGTFITLLPLLSLPAL). The Cytoplasmic portion of the chain corresponds to 200–218 (PPPPQPREHPLKSLLAGFR). The helical transmembrane segment at 219–239 (FLLASPLVGGIALLGGLLTMA) threads the bilayer. The Periplasmic segment spans residues 240–256 (SAVRVLYPALADNWQMS). A helical membrane pass occupies residues 257–277 (AAEIGFLYAAIPLGAAIGALT). Residues 278 to 287 (SGKLAHSARP) lie on the Cytoplasmic side of the membrane. A helical transmembrane segment spans residues 288–307 (GLLMLLSTLGSFLAIGLFGL). Residues 308 to 313 (MPMWIL) are Periplasmic-facing. The chain crosses the membrane as a helical span at residues 314-336 (GVVCLALFGWLSAVSSLLQYTML). Topologically, residues 337 to 356 (QTQTPEAMLGRINGLWTAQN) are cytoplasmic. The helical transmembrane segment at 357 to 377 (VTGDAIGAALLGGLGAMMTPV) threads the bilayer. Position 378 (Ala-378) is a topological domain, periplasmic. A helical membrane pass occupies residues 379–399 (SASASGFGLLIIGVLLLLVLV). At 400–416 (ELRRFRQTPPQVTASDS) the chain is on the cytoplasmic side.

Belongs to the major facilitator superfamily. EntS (TC 2.A.1.38) family.

It localises to the cell inner membrane. In terms of biological role, component of an export pathway for enterobactin. This chain is Enterobactin exporter EntS, found in Shigella boydii serotype 4 (strain Sb227).